Reading from the N-terminus, the 229-residue chain is uncharacterized protein (229 aa).

The next 7 membrane-spanning stretches (helical) occupy residues 6–26 (LFFV…FLPT), 36–56 (LVSV…ILLA), 80–99 (SVYD…HRIY), 114–134 (VLSV…HLII), 144–164 (IFEY…ATML), 174–194 (FYYH…IYKF), and 207–224 (YVEA…VLSS).

The protein belongs to the mimivirus L68/R809 family.

Its subcellular location is the membrane. This is an uncharacterized protein from Acanthamoeba polyphaga (Amoeba).